The sequence spans 360 residues: Peptide chain release factor 1 (360 aa).

An N5-methylglutamine modification is found at Gln-235. The disordered stretch occupies residues Ala-284–Pro-313.

Belongs to the prokaryotic/mitochondrial release factor family. Methylated by PrmC. Methylation increases the termination efficiency of RF1.

It is found in the cytoplasm. In terms of biological role, peptide chain release factor 1 directs the termination of translation in response to the peptide chain termination codons UAG and UAA. In Salmonella agona (strain SL483), this protein is Peptide chain release factor 1.